Reading from the N-terminus, the 74-residue chain is Small ribosomal subunit protein eS17 (74 aa).

The protein belongs to the eukaryotic ribosomal protein eS17 family.

The chain is Small ribosomal subunit protein eS17 from Aeropyrum pernix (strain ATCC 700893 / DSM 11879 / JCM 9820 / NBRC 100138 / K1).